The chain runs to 86 residues: uncharacterized protein (86 aa).

A helical membrane pass occupies residues 4 to 24; it reads LFFTLIAFVAIILLMSIGFII.

The protein resides in the membrane. This is an uncharacterized protein from Haemophilus influenzae (strain ATCC 51907 / DSM 11121 / KW20 / Rd).